We begin with the raw amino-acid sequence, 407 residues long: Protein ZNF365 (407 aa).

Serine 16 is modified (phosphoserine). A C2H2-type; degenerate zinc finger spans residues 26-51 (LRCPRCGDHTRFRSLSSLRAHLEFSH). Position 138 is a phosphoserine (serine 138). A coiled-coil region spans residues 169–297 (VEAVDRTIEK…QLEYYQSQQA (129 aa)). Threonine 175 bears the Phosphothreonine mark. Residues 347–392 (LKKAKDDRASMQPAKAIHEQAESSRDLCRPPKKGELLGFGRKGNIR) form a disordered region. A compositionally biased stretch (basic and acidic residues) spans 362-381 (AIHEQAESSRDLCRPPKKGE). Position 369 is a phosphoserine (serine 369).

Homodimer. Interacts with NDE1 and NDEL1. Does not interact with TUBG1. Interacts with DISC1. Interacts with PARP1. Interacts with MCRS1. As to expression, isoform 1 is expressed in brain. Isoform 2 is expressed in placenta and at low level in lung and liver. Isoform 3 is expressed in kidney and pancreas. Isoform 1 is expressed exclusively in brain.

Its subcellular location is the cytoplasm. The protein localises to the cytoskeleton. It is found in the microtubule organizing center. The protein resides in the centrosome. Functionally, involved in the regulation of neurogenesis. Negatively regulates neurite outgrowth. Involved in the morphogenesis of basket cells in the somatosensory cortex during embryogenesis. Involved in the positive regulation of oligodendrocyte differentiation during postnatal growth. Involved in dendritic arborization, morphogenesis of spine density dendrite, and establishment of postsynaptic dendrite density in cortical pyramidal neurons. Involved in homologous recombination (HR) repair pathway. Required for proper resolution of DNA double-strand breaks (DSBs) by HR. Is required for recovery of stalled replication forks, and directly contributes to genomic stability. Interacts with PARP1 and mediates MRE11-dependent DNA end resection during replication fork recovery. Contributes to genomic stability by preventing telomere dysfunction. This chain is Protein ZNF365 (ZNF365), found in Homo sapiens (Human).